Reading from the N-terminus, the 357-residue chain is Probable butyrate kinase 1 (357 aa).

This sequence belongs to the acetokinase family.

Its subcellular location is the cytoplasm. It catalyses the reaction butanoate + ATP = butanoyl phosphate + ADP. The polypeptide is Probable butyrate kinase 1 (Thermotoga maritima (strain ATCC 43589 / DSM 3109 / JCM 10099 / NBRC 100826 / MSB8)).